The sequence spans 171 residues: CDP-archaeol synthase (171 aa).

Helical transmembrane passes span 7-27, 55-75, 84-104, 115-135, and 141-161; these read MFWA…PVLL, FLGG…LTPA, VLLA…GSFI, PAVG…AYPV, and GQML…NYFA.

It belongs to the CDP-archaeol synthase family. Requires Mg(2+) as cofactor.

The protein resides in the cell membrane. It catalyses the reaction 2,3-bis-O-(geranylgeranyl)-sn-glycerol 1-phosphate + CTP + H(+) = CDP-2,3-bis-O-(geranylgeranyl)-sn-glycerol + diphosphate. The protein operates within membrane lipid metabolism; glycerophospholipid metabolism. Catalyzes the formation of CDP-2,3-bis-(O-geranylgeranyl)-sn-glycerol (CDP-archaeol) from 2,3-bis-(O-geranylgeranyl)-sn-glycerol 1-phosphate (DGGGP) and CTP. This reaction is the third ether-bond-formation step in the biosynthesis of archaeal membrane lipids. In Thermococcus gammatolerans (strain DSM 15229 / JCM 11827 / EJ3), this protein is CDP-archaeol synthase.